The chain runs to 389 residues: 8-amino-7-oxononanoate synthase 2 (389 aa).

R21 contacts substrate. 108–109 (GY) provides a ligand contact to pyridoxal 5'-phosphate. H133 is a substrate binding site. Pyridoxal 5'-phosphate contacts are provided by residues S180, 205 to 208 (DDAH), and 234 to 237 (TLSK). The residue at position 237 (K237) is an N6-(pyridoxal phosphate)lysine. T351 is a binding site for substrate.

It belongs to the class-II pyridoxal-phosphate-dependent aminotransferase family. BioF subfamily. Homodimer. The cofactor is pyridoxal 5'-phosphate.

It catalyses the reaction 6-carboxyhexanoyl-[ACP] + L-alanine + H(+) = (8S)-8-amino-7-oxononanoate + holo-[ACP] + CO2. The protein operates within cofactor biosynthesis; biotin biosynthesis. Functionally, catalyzes the decarboxylative condensation of pimeloyl-[acyl-carrier protein] and L-alanine to produce 8-amino-7-oxononanoate (AON), [acyl-carrier protein], and carbon dioxide. In Bacillus subtilis (strain 168), this protein is 8-amino-7-oxononanoate synthase 2 (bioF).